The chain runs to 212 residues: Protein-L-isoaspartate O-methyltransferase (212 aa).

Serine 60 is a catalytic residue.

Belongs to the methyltransferase superfamily. L-isoaspartyl/D-aspartyl protein methyltransferase family.

It is found in the cytoplasm. It catalyses the reaction [protein]-L-isoaspartate + S-adenosyl-L-methionine = [protein]-L-isoaspartate alpha-methyl ester + S-adenosyl-L-homocysteine. Its function is as follows. Catalyzes the methyl esterification of L-isoaspartyl residues in peptides and proteins that result from spontaneous decomposition of normal L-aspartyl and L-asparaginyl residues. It plays a role in the repair and/or degradation of damaged proteins. The sequence is that of Protein-L-isoaspartate O-methyltransferase from Methylorubrum populi (strain ATCC BAA-705 / NCIMB 13946 / BJ001) (Methylobacterium populi).